The primary structure comprises 1705 residues: Intersectin-1 (1705 aa).

EH domains lie at 21 to 109 and 220 to 309; these read ERAK…PVAM and SRLK…SFRR. 2 EF-hand domains span residues 53–88 and 253–288; these read LPQP…IKLK and LPQS…IDVA. Residues Asp-66, Asn-68, Asp-70, Arg-72, Glu-77, Asp-266, Asp-268, Asp-270, Lys-272, and Glu-277 each coordinate Ca(2+). Disordered stretches follow at residues 322 to 355, 386 to 433, and 668 to 708; these read VSVD…KREN, RAEQ…ERRE, and RYKF…PPEP. The KLERQ stretch occupies residues 325-697; the sequence is DQRLPEEPEE…VEKKPEIQEK (373 aa). Positions 339–355 are enriched in basic and acidic residues; sequence NADKKLPVTFEDKKREN. Positions 350–687 form a coiled coil; that stretch reads DKKRENFERG…KREESIQKCE (338 aa). Residues 668–699 are compositionally biased toward basic and acidic residues; the sequence is RYKFQDEEKEKREESIQKCEVEKKPEIQEKPN. The SH3 1 domain maps to 732-793; that stretch reads VKVVYYRALY…PANYAERMPE (62 aa). Residues 823 to 833 show a composition bias toward low complexity; it reads AFTNTSTNSNN. Positions 823–851 are disordered; it reads AFTNTSTNSNNWADFSSTWPTNNTDKVES. Polar residues predominate over residues 834–846; it reads WADFSSTWPTNNT. In terms of domain architecture, SH3 2 spans 897-955; the sequence is VEGLQAQALYPWRAKKDNHLNFNKNDVITVLEQQDMWWFGEVQGQKGWFPKSYVKLISG. The segment at 959–978 is disordered; it reads KSTSIDSTSSESPASLKRVS. A compositionally biased stretch (low complexity) spans 960 to 973; sequence STSIDSTSSESPAS. SH3 domains follow at residues 986 to 1044, 1058 to 1122, and 1139 to 1198; these read IQGE…PKDS, KKPE…LLSP, and PPTC…LTTD. A Bipartite nuclear localization signal; in isoform 2 motif is present at residues 1088-1111; sequence RKKNPGGWWEGELQARGKKRQIGW. The region spanning 1221 to 1407 is the DH domain; that stretch reads KRQGYIHELI…EELCSQVNEG (187 aa). Positions 1446–1555 constitute a PH domain; the sequence is KFLHSGKLYK…WVQKIKAASE (110 aa). Positions 1563-1679 constitute a C2 domain; it reads KKREKAYLVR…KKDQGSKGPV (117 aa). Ca(2+) is bound by residues Asp-1651, Ser-1654, and Asp-1657.

In terms of assembly, binds epn1 and epn2. Ca(2+) is required as a cofactor.

It is found in the endomembrane system. Its subcellular location is the synapse. The protein resides in the synaptosome. It localises to the cell projection. The protein localises to the lamellipodium. It is found in the cell membrane. Its subcellular location is the membrane. The protein resides in the clathrin-coated pit. It localises to the recycling endosome. The protein localises to the cytoplasm. It is found in the nucleus envelope. Its function is as follows. Adapter protein that provides a link between the endocytic membrane traffic and the actin assembly machinery. Acts as a guanine nucleotide exchange factor (GEF) for cdc42, and thereby stimulates actin nucleation mediated by wasl and the arp2/3 complex. Involved in endocytosis of activated egfr, and probably also other growth factor receptors. The polypeptide is Intersectin-1 (itsn1) (Xenopus laevis (African clawed frog)).